The chain runs to 376 residues: Phosphoserine aminotransferase (376 aa).

Position 54 (R54) interacts with L-glutamate. Pyridoxal 5'-phosphate is bound by residues 88–89, W115, T165, D186, and Q209; that span reads AT. K210 bears the N6-(pyridoxal phosphate)lysine mark. Pyridoxal 5'-phosphate is bound at residue 251–252; sequence NT.

Belongs to the class-V pyridoxal-phosphate-dependent aminotransferase family. SerC subfamily. Homodimer. Requires pyridoxal 5'-phosphate as cofactor.

The protein resides in the cytoplasm. The catalysed reaction is O-phospho-L-serine + 2-oxoglutarate = 3-phosphooxypyruvate + L-glutamate. The enzyme catalyses 4-(phosphooxy)-L-threonine + 2-oxoglutarate = (R)-3-hydroxy-2-oxo-4-phosphooxybutanoate + L-glutamate. It participates in amino-acid biosynthesis; L-serine biosynthesis; L-serine from 3-phospho-D-glycerate: step 2/3. Its pathway is cofactor biosynthesis; pyridoxine 5'-phosphate biosynthesis; pyridoxine 5'-phosphate from D-erythrose 4-phosphate: step 3/5. Catalyzes the reversible conversion of 3-phosphohydroxypyruvate to phosphoserine and of 3-hydroxy-2-oxo-4-phosphonooxybutanoate to phosphohydroxythreonine. In Rhodopirellula baltica (strain DSM 10527 / NCIMB 13988 / SH1), this protein is Phosphoserine aminotransferase.